The primary structure comprises 154 residues: Large ribosomal subunit protein uL30 (154 aa).

The interval 114-139 (PVLRLHPPRGGHRGQKHPTAEGGQIG) is disordered. Basic residues predominate over residues 119-129 (HPPRGGHRGQK).

It belongs to the universal ribosomal protein uL30 family. As to quaternary structure, part of the 50S ribosomal subunit.

This is Large ribosomal subunit protein uL30 from Haloquadratum walsbyi (strain DSM 16790 / HBSQ001).